Reading from the N-terminus, the 161-residue chain is NADH-quinone oxidoreductase subunit C (161 aa).

The protein belongs to the complex I 30 kDa subunit family. In terms of assembly, NDH-1 is composed of 14 different subunits. Subunits NuoB, C, D, E, F, and G constitute the peripheral sector of the complex.

The protein resides in the cell inner membrane. The enzyme catalyses a quinone + NADH + 5 H(+)(in) = a quinol + NAD(+) + 4 H(+)(out). In terms of biological role, NDH-1 shuttles electrons from NADH, via FMN and iron-sulfur (Fe-S) centers, to quinones in the respiratory chain. The immediate electron acceptor for the enzyme in this species is believed to be ubiquinone. Couples the redox reaction to proton translocation (for every two electrons transferred, four hydrogen ions are translocated across the cytoplasmic membrane), and thus conserves the redox energy in a proton gradient. The polypeptide is NADH-quinone oxidoreductase subunit C (Citrifermentans bemidjiense (strain ATCC BAA-1014 / DSM 16622 / JCM 12645 / Bem) (Geobacter bemidjiensis)).